A 461-amino-acid polypeptide reads, in one-letter code: D-phenylhydantoinase (461 aa).

3 residues coordinate a divalent metal cation: His59, His61, and Lys151. Residue Lys151 is modified to N6-carboxylysine. Position 156 (Tyr156) interacts with substrate. A divalent metal cation is bound by residues His182 and His239. Ser286 serves as a coordination point for substrate. An a divalent metal cation-binding site is contributed by Asp313. Substrate is bound at residue Asn335.

This sequence belongs to the metallo-dependent hydrolases superfamily. Hydantoinase/dihydropyrimidinase family. Homotetramer. It depends on a divalent metal cation as a cofactor. Post-translationally, carboxylation allows a single lysine to coordinate two divalent metal cations.

It catalyses the reaction D-5-phenylhydantoin + H2O = N-carbamoyl-D-phenylglycine + H(+). Functionally, catalyzes the stereospecific hydrolysis of the cyclic amide bond of D-hydantoin derivatives with an aromatic side chains at the 5'-position. Has no activity on dihydropyrimidines. The physiological function is unknown. In Escherichia coli O127:H6 (strain E2348/69 / EPEC), this protein is D-phenylhydantoinase.